Here is a 523-residue protein sequence, read N- to C-terminus: MSFRKEDGVSSLCQKALHIITELCFAGQVEWDKCSGIFPADRSGQGGGGTDISVSLLAVVVSFCGLALLVVSLFVFWKLCWPCWKSKLVAPNLSVLPQSISSAPTEVFETEEKKEVEENEKPAPKAIEPAIKISHTSPDIPAEVQTALKEHLIKHARVQRQTTEPTSSSRHNSFRRHLPRQMNVSSVDFSVGTEPILQRGETRTSIGRIKPELYKQKSVDSEGNRKDDVKTCGKLNFALQYDYENELLVVKIIKALDLPAKDFTGTSDPYVKIYLLPDRKKKFQTRVHRKTLNPLFDELFQFPVVYDQLSNRKLHFSIYDFDRFSRHDMIGEVILDNLFEVSDLSREATVWKDIHCATTESIDLGEIMFSLCYLPTAGRMTLTVIKCRNLKAMDITGSSDPYVKVSLMCEGRRLKKRKTTTKKNTLNPVYNEAIIFDIPPENVDQVSLCIAVMDYDRVGHNEVIGVCRTGLDAEGLGRDHWNEMLAYHRKPITHWHPLLELPGRATSFDSQGSCSSPRPPSTP.

Residues Met1–Ser55 lie on the Vesicular side of the membrane. The tract at residues Cys13–Ser35 is cysteine motif. Residues Leu56 to Phe76 form a helical membrane-spanning segment. The Cytoplasmic segment spans residues Trp77–Pro523. Thr136 bears the Phosphothreonine mark. C2 domains are found at residues Thr231 to Lys352 and Asp363 to His496. Ca(2+)-binding residues include Asp262, Asp268, Asp320, Phe321, Asp322, Ser325, Asp328, Asp394, Asp400, Asp454, and Asp456.

This sequence belongs to the synaptotagmin family. As to quaternary structure, homodimer; disulfide-linked via the cysteine motif. Can also form heterodimers with SYT3, SYT6, SYT7 and SYT9. Requires Ca(2+) as cofactor. As to expression, highly expressed in the olfactory bulb.

It localises to the cytoplasmic vesicle. It is found in the secretory vesicle membrane. Ca(2+) sensor specifically required for the Ca(2+)-dependent exocytosis of secretory vesicles containing IGF1 in neurons of the olfactory bulb. Exocytosis of IGF1 is required for sensory perception of smell. Not involved in Ca(2+)-dependent synaptic vesicle exocytosis. Acts through Ca(2+) and phospholipid binding to the C2 domain: Ca(2+) induces binding of the C2-domains to phospholipid membranes and to assembled SNARE-complexes; both actions contribute to triggering exocytosis. This Mus musculus (Mouse) protein is Synaptotagmin-10.